Consider the following 369-residue polypeptide: MADSAQVPTLVYLVTGGCGFLGEHIVRMLLEREPRLRELRVFDLHLSSWLEELKAGPVQVTAIQGDVTQAHEVAAAMSGSHVVIHTAGLVDVFGKASPKTIHKVNVQGTQNVIDACVQTGTQYLVYTSSMEVVGPNIKGHPFYRGNEDTPYEAVHSHPYPCSKALAEQLVLEANGRKVNGGLPLVTCALRPTGIYGEGHQVMRDFYYQGLRFGGRLFRAVPASVEHGRVYVGNVAWMHILVARELEQRAALMGGQVYFCYDKSPYKSYEDFNMEFLSPCGLRLIGAHPLLPYWLLVLLATLNALLQWLLRPLVLYTPLLNPYTLAMANTTFTVSTNKAQRHFGYKPLFSWEESRTRTIQWVQAMEGSAR.

Residue Tyr-159 is the Proton acceptor of the active site. Residue Lys-163 participates in NAD(+) binding. 2 consecutive transmembrane segments (helical) span residues 289–309 (LLPY…QWLL) and 312–334 (LVLY…FTVS).

It belongs to the 3-beta-HSD family. In terms of tissue distribution, predominantly expressed in liver.

The protein resides in the endoplasmic reticulum membrane. The catalysed reaction is 7alpha-hydroxycholesterol + NAD(+) = 7alpha-hydroxycholest-4-en-3-one + NADH + H(+). It carries out the reaction 7alpha,25-dihydroxycholesterol + NAD(+) = 7alpha,25-dihydroxy-4-cholesten-3-one + NADH + H(+). It catalyses the reaction (25R)-cholest-5-en-3beta,7alpha,26-triol + NAD(+) = (25R)-7alpha,26-dihydroxycholest-4-en-3-one + NADH + H(+). The enzyme catalyses (24S)-7alpha-dihydroxycholesterol + NAD(+) = (24S)-7alpha,24-dihydroxycholest-4-en-3-one + NADH + H(+). Its pathway is lipid metabolism; steroid biosynthesis. In terms of biological role, the 3-beta-HSD enzymatic system plays a crucial role in the biosynthesis of all classes of hormonal steroids. HSD VII is active against four 7-alpha-hydroxylated sterols. Does not metabolize several different C(19/21) steroids as substrates. Involved in bile acid synthesis. Plays a key role in cell positioning and movement in lymphoid tissues by mediating degradation of 7-alpha,25-dihydroxycholesterol (7-alpha,25-OHC): 7-alpha,25-OHC acts as a ligand for the G protein-coupled receptor GPR183/EBI2, a chemotactic receptor for a number of lymphoid cells. This is 3 beta-hydroxysteroid dehydrogenase type 7 from Mus musculus (Mouse).